The sequence spans 207 residues: Urease accessory protein UreG (207 aa).

12–19 contacts GTP; the sequence is GPVGAGKT.

This sequence belongs to the SIMIBI class G3E GTPase family. UreG subfamily. Homodimer. UreD, UreF and UreG form a complex that acts as a GTP-hydrolysis-dependent molecular chaperone, activating the urease apoprotein by helping to assemble the nickel containing metallocenter of UreC. The UreE protein probably delivers the nickel.

It is found in the cytoplasm. In terms of biological role, facilitates the functional incorporation of the urease nickel metallocenter. This process requires GTP hydrolysis, probably effectuated by UreG. The protein is Urease accessory protein UreG of Cereibacter sphaeroides (strain KD131 / KCTC 12085) (Rhodobacter sphaeroides).